The primary structure comprises 215 residues: C' protein (215 aa).

Residues 12–34 form a disordered region; sequence MPSFLKKILKLRGRRQEDESRSR. The segment at 15 to 22 is involved in self-degradation and in host STAT1 degradation; sequence FLKKILKL.

This sequence belongs to the respirovirus protein C family. In terms of assembly, the different isoforms interact (via C-terminus) with unphosphorylated and phosphorylated human STAT1 (via N-terminus), favoring the formation of parallel STAT1 homodimers. The different isoforms do not interact with host STAT2. C protein interacts with L protein; this interaction has an inhibitory effect on viral transcription and replication. Y1 and Y2 proteins are produced not only by alternative initiation, but also by proteolytic cleavage of C'. Only alternative initiation is detected in vitro, whereas in vivo cleavage seems to be predominant.

The protein localises to the host cytoplasm. The protein resides in the virion. The different isoforms prevent the establishment of cellular antiviral state by blocking the interferon-alpha/beta (IFN-alpha/beta) and IFN-gamma signaling pathways. They inhibit IFN-alpha/beta induced tyrosine phosphorylation of STAT1 and STAT2. Blocking the IFN-alpha/beta pathway requires binding to STAT1 in the cytoplasm. They inhibit IFN-gamma induced serine phosphorylation of STAT1. Block the IFN-gamma pathway by binding to and stabilizing the parallel form of the STAT1 dimer, further inducing high-molecular-weight complex (HMWC) formation and inhibition of transcription by IFN-gamma. May also have a role in preventing the cell to enter apoptosis. Modulate regulation of viral transcription and replication. Overexpression inhibits the viral RNA polymerase. The absence of all C', C, Y1 and Y2 proteins leads to viral delayed growth. Plays an important role in virion particles release. Modulates virion shape. In Sendai virus (strain Z) (SeV), this protein is C' protein (P/V/C).